A 235-amino-acid polypeptide reads, in one-letter code: Phosphatidylserine decarboxylase proenzyme (235 aa).

The active-site Schiff-base intermediate with substrate; via pyruvic acid is serine 204. Serine 204 bears the Pyruvic acid (Ser); by autocatalysis mark.

This sequence belongs to the phosphatidylserine decarboxylase family. PSD-A subfamily. As to quaternary structure, heterodimer of a large membrane-associated beta subunit and a small pyruvoyl-containing alpha subunit. The cofactor is pyruvate. Is synthesized initially as an inactive proenzyme. Formation of the active enzyme involves a self-maturation process in which the active site pyruvoyl group is generated from an internal serine residue via an autocatalytic post-translational modification. Two non-identical subunits are generated from the proenzyme in this reaction, and the pyruvate is formed at the N-terminus of the alpha chain, which is derived from the carboxyl end of the proenzyme. The post-translation cleavage follows an unusual pathway, termed non-hydrolytic serinolysis, in which the side chain hydroxyl group of the serine supplies its oxygen atom to form the C-terminus of the beta chain, while the remainder of the serine residue undergoes an oxidative deamination to produce ammonia and the pyruvoyl prosthetic group on the alpha chain.

Its subcellular location is the cell membrane. It catalyses the reaction a 1,2-diacyl-sn-glycero-3-phospho-L-serine + H(+) = a 1,2-diacyl-sn-glycero-3-phosphoethanolamine + CO2. The protein operates within phospholipid metabolism; phosphatidylethanolamine biosynthesis; phosphatidylethanolamine from CDP-diacylglycerol: step 2/2. In terms of biological role, catalyzes the formation of phosphatidylethanolamine (PtdEtn) from phosphatidylserine (PtdSer). The chain is Phosphatidylserine decarboxylase proenzyme from Mycobacterium sp. (strain JLS).